Consider the following 94-residue polypeptide: Cell division topological specificity factor (94 aa).

The protein belongs to the MinE family.

Prevents the cell division inhibition by proteins MinC and MinD at internal division sites while permitting inhibition at polar sites. This ensures cell division at the proper site by restricting the formation of a division septum at the midpoint of the long axis of the cell. The sequence is that of Cell division topological specificity factor from Beijerinckia indica subsp. indica (strain ATCC 9039 / DSM 1715 / NCIMB 8712).